A 483-amino-acid polypeptide reads, in one-letter code: UDP-N-acetylmuramate--L-alanine ligase (483 aa).

122 to 128 (GSHGKTT) contributes to the ATP binding site.

This sequence belongs to the MurCDEF family.

It localises to the cytoplasm. The enzyme catalyses UDP-N-acetyl-alpha-D-muramate + L-alanine + ATP = UDP-N-acetyl-alpha-D-muramoyl-L-alanine + ADP + phosphate + H(+). Its pathway is cell wall biogenesis; peptidoglycan biosynthesis. Cell wall formation. This chain is UDP-N-acetylmuramate--L-alanine ligase, found in Synechococcus sp. (strain CC9311).